The following is a 609-amino-acid chain: Sterol O-acyltransferase 2 (609 aa).

Positions Met1–Asp15 are enriched in polar residues. The tract at residues Met1–Lys41 is disordered. The next 6 membrane-spanning stretches (helical) occupy residues Phe152–Ile172, Leu195–Val215, Val229–Ala249, Cys253–Met273, Trp402–Ile422, and Phe451–Ile471. Residues Phe490–Ser496 carry the FYXDWWN motif motif. The next 2 helical transmembrane spans lie at Ala534–Phe554 and Ile589–Phe609. The active site involves His546.

Belongs to the membrane-bound acyltransferase family. Sterol o-acyltransferase subfamily.

The protein localises to the endoplasmic reticulum membrane. Inhibited by the protoberberine derivative HWY-289 in a non-competitive manner. Inhibited by miconazole. Not inhibited by CI-976, polyoxin D, amphotericin B or nikkomycin Z. Sterol O-acyltransferase that catalyzes the formation of stery esters. The chain is Sterol O-acyltransferase 2 from Candida albicans (Yeast).